The chain runs to 340 residues: Glycerol-3-phosphate dehydrogenase [NAD(P)+] (340 aa).

NADPH is bound by residues S14, Y15, H35, and K109. 3 residues coordinate sn-glycerol 3-phosphate: K109, G138, and T140. A142 provides a ligand contact to NADPH. Residues K194, D247, S257, R258, and N259 each contribute to the sn-glycerol 3-phosphate site. K194 acts as the Proton acceptor in catalysis. R258 contacts NADPH. The NADPH site is built by V282 and E284.

The protein belongs to the NAD-dependent glycerol-3-phosphate dehydrogenase family.

Its subcellular location is the cytoplasm. It carries out the reaction sn-glycerol 3-phosphate + NAD(+) = dihydroxyacetone phosphate + NADH + H(+). The enzyme catalyses sn-glycerol 3-phosphate + NADP(+) = dihydroxyacetone phosphate + NADPH + H(+). It functions in the pathway membrane lipid metabolism; glycerophospholipid metabolism. Functionally, catalyzes the reduction of the glycolytic intermediate dihydroxyacetone phosphate (DHAP) to sn-glycerol 3-phosphate (G3P), the key precursor for phospholipid synthesis. The sequence is that of Glycerol-3-phosphate dehydrogenase [NAD(P)+] from Photorhabdus laumondii subsp. laumondii (strain DSM 15139 / CIP 105565 / TT01) (Photorhabdus luminescens subsp. laumondii).